We begin with the raw amino-acid sequence, 355 residues long: Replication-associated protein (355 aa).

The region spanning 11–114 is the CRESS-DNA virus Rep endonuclease domain; it reads LHRTANTFLT…PLALFERGTF (104 aa). Residues 18–21 carry the RCR-1 motif; the sequence is FLTY. Residues Glu52, His60, and His62 each coordinate a divalent metal cation. An RCR-2 motif is present at residues 60 to 62; the sequence is HLH. The active-site For DNA cleavage activity is the Tyr100. The RCR-3 signature appears at 100–103; the sequence is YILK. Glu104 provides a ligand contact to a divalent metal cation. Positions 175–187 are oligomerization; that stretch reads SANKLFPDIQEEF. 229–236 provides a ligand contact to ATP; the sequence is GPTRTGKS. The interval 252 to 270 is transactivation; the sequence is VDWSSYNEDAIYNIVDDIP. Positions 292–303 match the Nuclear localization signal motif; that stretch reads KYGKKKKVQMKS.

This sequence belongs to the geminiviridae Rep protein family. In terms of assembly, homooligomer. Rep binds to repeated DNA motifs (iterons). Forms the O-complex, which is a Rep-DNA complex involved in the initiation of RCR. Part of the C- and V-complexes which are RepA-Rep-DNA complexes involved in the c-sense and v-sense transcription. Requires Mg(2+) as cofactor. Mn(2+) is required as a cofactor.

It is found in the host nucleus. In terms of biological role, essential for the replication of viral ssDNA. The closed circular ssDNA genome is first converted to a superhelical dsDNA. Rep binds a specific region at the genome origin of replication. It introduces an endonucleolytic nick within the conserved sequence 5'-TAATATTAC-3' in the intergenic region of the genome present in all geminiviruses, thereby initiating the rolling circle replication (RCR). Following cleavage, binds covalently to the 5'-phosphate of DNA as a tyrosyl ester. The cleavage gives rise to a free 3'-OH that serves as a primer for the cellular DNA polymerase. The polymerase synthesizes the (+) strand DNA by rolling circle mechanism. After one round of replication, a Rep-catalyzed nucleotidyl transfer reaction releases a circular single-stranded virus genome, thereby terminating the replication. Displays origin-specific DNA cleavage, nucleotidyl transferase, ATPase and helicase activities. Acts as an inhibitor of C-sense gene transcription. The chain is Replication-associated protein from Maize streak virus genotype D (isolate Raw) (MSV).